The primary structure comprises 534 residues: Glycolytic genes transcriptional activator GCR2 (534 aa).

A disordered region spans residues 29-122 (LQSVTNSPQT…TGNNASSSAT (94 aa)). Residues 30–43 (QSVTNSPQTTTNTP) show a composition bias toward low complexity. A compositionally biased stretch (polar residues) spans 64–88 (SDSTPNIDEIITSTGSNALTKTNSD). Residues 89-122 (SANGTPNGNSSSTSAISNASNPATTGNNASSSAT) are compositionally biased toward low complexity. S151 bears the Phosphoserine mark. Residues 230-333 (LTQGRRKGNS…SNPGTNMLFD (104 aa)) are disordered. Residues 238-252 (NSLNTSTKGSPSDLQ) show a composition bias toward polar residues. Low complexity predominate over residues 253 to 279 (GINNGNNNGNNGNIGNGSNIKNYGNKN). Residues 281–288 (PNNRTKKR) carry the Nuclear localization signal motif. Residues 295–304 (NAKNGKNNKN) show a composition bias toward low complexity. Over residues 312 to 328 (ITDTSAFSNTTISNPGT) the composition is skewed to polar residues. S406 and S409 each carry phosphoserine. The segment at 497-534 (IVQLERELELQRQETQWLRKMLIEDMGCVRSMLRDLQR) is leucine-zipper.

As to quaternary structure, homodimer via the leucine-zipper domain. Forms a complex with a GCR1 homodimer.

It localises to the nucleus. In terms of biological role, transcriptional activator required for the expression of glycolytic genes. Enhances the CT box-dependent transcriptional activation of a RAP1-GCR1 complex. Required for GCR1 phosphorylation. This chain is Glycolytic genes transcriptional activator GCR2 (GCR2), found in Saccharomyces cerevisiae (strain ATCC 204508 / S288c) (Baker's yeast).